The chain runs to 545 residues: Methionine--tRNA ligase (545 aa).

Residues 15-25 (PYANGPIHLGH) carry the 'HIGH' region motif. Cys146, Cys149, Cys159, and Cys162 together coordinate Zn(2+). Residues 332–336 (KMSKS) carry the 'KMSKS' region motif. ATP is bound at residue Lys335.

Belongs to the class-I aminoacyl-tRNA synthetase family. MetG type 1 subfamily. In terms of assembly, monomer. The cofactor is Zn(2+).

Its subcellular location is the cytoplasm. The catalysed reaction is tRNA(Met) + L-methionine + ATP = L-methionyl-tRNA(Met) + AMP + diphosphate. In terms of biological role, is required not only for elongation of protein synthesis but also for the initiation of all mRNA translation through initiator tRNA(fMet) aminoacylation. This is Methionine--tRNA ligase from Hamiltonella defensa subsp. Acyrthosiphon pisum (strain 5AT).